The primary structure comprises 174 residues: Ribosomal RNA large subunit methyltransferase H (174 aa).

Residues Leu90, Gly122, and 141-146 (LGELTW) each bind S-adenosyl-L-methionine.

The protein belongs to the RNA methyltransferase RlmH family. Homodimer.

It localises to the cytoplasm. It catalyses the reaction pseudouridine(1915) in 23S rRNA + S-adenosyl-L-methionine = N(3)-methylpseudouridine(1915) in 23S rRNA + S-adenosyl-L-homocysteine + H(+). Functionally, specifically methylates the pseudouridine at position 1915 (m3Psi1915) in 23S rRNA. This Brucella melitensis biotype 2 (strain ATCC 23457) protein is Ribosomal RNA large subunit methyltransferase H.